We begin with the raw amino-acid sequence, 493 residues long: Envelope glycoprotein gp63 (493 aa).

The signal sequence occupies residues 1-22 (MGKSGLYFSLICFYTLFPSSFG). The Extracellular portion of the chain corresponds to 23 to 446 (NPSRCTLFIG…GLSQWAREAL (424 aa)). N-linked (GlcNAc...) asparagine; by host glycans are attached at residues Asn140 and Asn222. A CXXC motif is present at residues 225-228 (CMVC). Disulfide bonds link Cys225/Cys228, Cys225/Cys404, and Cys396/Cys403. A glycan (N-linked (GlcNAc...) asparagine; by host) is linked at Asn292. Residues 316-336 (AVPIAIWLVSALAAGTGIAGG) are fusion peptide. Coiled-coil stretches lie at residues 344–390 (ASSK…LLFW) and 400–432 (QEQCCFLNISNTHVSVLQERPPLEKRVITGWGL). The immunosuppression stretch occupies residues 379 to 395 (AQNRRGLDLLFWEQGGL). Positions 396-404 (CKAIQEQCC) match the CX6CC motif. N-linked (GlcNAc...) asparagine; by host glycosylation occurs at Asn407. A helical membrane pass occupies residues 447 to 467 (QTGITLLALFLLLIVVGPCVI). The S-palmitoyl cysteine; by host moiety is linked to residue Cys465. Residues 468–493 (RQLQTLPSRLQHRSQPYSLLNYETNL) lie on the Cytoplasmic side of the membrane.

As to quaternary structure, the mature envelope protein (Env) consists of a trimer of SU-TM heterodimers attached by a labile interchain disulfide bond. Specific enzymatic cleavages in vivo yield mature proteins. Envelope glycoproteins are synthesized as an inactive precursor that is N-glycosylated and processed likely by host cell furin or by a furin-like protease in the Golgi to yield the mature SU and TM proteins. The cleavage site between SU and TM requires the minimal sequence [KR]-X-[KR]-R. In terms of processing, the CXXC motif is highly conserved across a broad range of retroviral envelope proteins. It is thought to participate in the formation of a labile disulfide bond possibly with the CX6CC motif present in the transmembrane protein. Isomerization of the intersubunit disulfide bond to an SU intrachain disulfide bond is thought to occur upon receptor recognition in order to allow membrane fusion. Post-translationally, the transmembrane protein is palmitoylated.

It localises to the virion membrane. The protein resides in the host cell membrane. Its function is as follows. The surface protein (SU) attaches the virus to the host cell by binding to its receptor. This interaction triggers the refolding of the transmembrane protein (TM) and is thought to activate its fusogenic potential by unmasking its fusion peptide. Fusion occurs at the host cell plasma membrane. In terms of biological role, the transmembrane protein (TM) acts as a class I viral fusion protein. Under the current model, the protein has at least 3 conformational states: pre-fusion native state, pre-hairpin intermediate state, and post-fusion hairpin state. During viral and target cell membrane fusion, the coiled coil regions (heptad repeats) assume a trimer-of-hairpins structure, positioning the fusion peptide in close proximity to the C-terminal region of the ectodomain. The formation of this structure appears to drive apposition and subsequent fusion of viral and target cell membranes. Membranes fusion leads to delivery of the nucleocapsid into the cytoplasm. The sequence is that of Envelope glycoprotein gp63 (env) from Human T-cell leukemia virus 3 (strain Pyl43) (HTLV-3).